We begin with the raw amino-acid sequence, 328 residues long: Lipoate--protein ligase 1 (328 aa).

Residues 27–214 (PAEESYFLFY…TIFGETEVEE (188 aa)) form the BPL/LPL catalytic domain. Residues arginine 69, 74–77 (GAVY), and lysine 131 each bind ATP. Residue lysine 131 participates in (R)-lipoate binding.

The catalysed reaction is L-lysyl-[lipoyl-carrier protein] + (R)-lipoate + ATP = N(6)-[(R)-lipoyl]-L-lysyl-[lipoyl-carrier protein] + AMP + diphosphate + H(+). It functions in the pathway protein modification; protein lipoylation via exogenous pathway; protein N(6)-(lipoyl)lysine from lipoate: step 1/2. Its pathway is protein modification; protein lipoylation via exogenous pathway; protein N(6)-(lipoyl)lysine from lipoate: step 2/2. Its function is as follows. Catalyzes the lipoylation of proteins, such as GcvH (SAV0833) and GcvH-L (SAV0324), likely via the ATP-dependent activation of lipoate to lipoyl-AMP and the transfer of the activated lipoyl onto the lipoyl domain of the target protein. This Staphylococcus aureus (strain Mu50 / ATCC 700699) protein is Lipoate--protein ligase 1.